A 119-amino-acid chain; its full sequence is Large ribosomal subunit protein uL18 (119 aa).

A disordered region spans residues 1–20 (MSQIDKAARRQKIKARSRAT). Positions 9–19 (RRQKIKARSRA) are enriched in basic residues.

Belongs to the universal ribosomal protein uL18 family. In terms of assembly, part of the 50S ribosomal subunit; part of the 5S rRNA/L5/L18/L25 subcomplex. Contacts the 5S and 23S rRNAs.

Its function is as follows. This is one of the proteins that bind and probably mediate the attachment of the 5S RNA into the large ribosomal subunit, where it forms part of the central protuberance. This chain is Large ribosomal subunit protein uL18, found in Chlorobaculum parvum (strain DSM 263 / NCIMB 8327) (Chlorobium vibrioforme subsp. thiosulfatophilum).